Here is a 314-residue protein sequence, read N- to C-terminus: MGEIRSFVLITVALILGKESWVLGDENCLQEQVRLRAQVRQLETRVKQQQVVIAQLLHEKEVQFLDRGQEDSFIDLGGKRHYADCSEIYNDGFKHSGFYKIKPLQSLAEFSVYCDMSDGGGWTVIQRRSDGSENFNRGWNDYENGFGNFVQSNGEYWLGNKNINLLTMQGDYTLKIDLTDFEKNSRFAQYEKFKVGDEKSFYELNIGEYSGTAGDSLSGTFHPEVQWWASHQTMKFSTRDRDNDNYNGNCAEEEQSGWWFNRCHSANLNGVYYQGPYRAETDNGVVWYTWRGWWYSLKSVVMKIRPSDFIPNIV.

The signal sequence occupies residues 1-22 (MGEIRSFVLITVALILGKESWV). The stretch at 28–62 (CLQEQVRLRAQVRQLETRVKQQQVVIAQLLHEKEV) forms a coiled coil. Residues 76-308 (LGGKRHYADC…SVVMKIRPSD (233 aa)) form the Fibrinogen C-terminal domain. 2 disulfide bridges follow: Cys85–Cys114 and Cys250–Cys263.

Homodimer. Interacts (via the Fibrinogen C-terminal domain) with LAG3 (via Ig-like domains 1 and 2).

It is found in the secreted. In terms of biological role, immune suppressive molecule that inhibits antigen-specific T-cell activation by acting as a major ligand of LAG3. Responsible for LAG3 T-cell inhibitory function. Binds LAG3 independently from MHC class II (MHC-II). Secreted by, and promotes growth of, hepatocytes. The protein is Fibrinogen-like protein 1 of Rattus norvegicus (Rat).